We begin with the raw amino-acid sequence, 494 residues long: GTPase Der (494 aa).

EngA-type G domains are found at residues 2–164 (KKIA…PEED) and 235–407 (IKIS…KNYS). Residues 8-15 (GRPNVGKS), 55-59 (DTGGL), 116-119 (NKID), 241-248 (GRTNVGKS), 288-292 (DTAGL), and 352-355 (NKWD) contribute to the GTP site. The KH-like domain maps to 408–492 (QHIKTSELNV…PVLFKAKKRG (85 aa)).

This sequence belongs to the TRAFAC class TrmE-Era-EngA-EngB-Septin-like GTPase superfamily. EngA (Der) GTPase family. As to quaternary structure, associates with the 50S ribosomal subunit.

GTPase that plays an essential role in the late steps of ribosome biogenesis. This chain is GTPase Der, found in Sulfurimonas denitrificans (strain ATCC 33889 / DSM 1251) (Thiomicrospira denitrificans (strain ATCC 33889 / DSM 1251)).